The chain runs to 153 residues: Ribosome maturation factor RimP (153 aa).

It belongs to the RimP family.

It is found in the cytoplasm. Required for maturation of 30S ribosomal subunits. The chain is Ribosome maturation factor RimP from Histophilus somni (strain 2336) (Haemophilus somnus).